We begin with the raw amino-acid sequence, 504 residues long: Maturase K (504 aa).

Belongs to the intron maturase 2 family. MatK subfamily.

The protein localises to the plastid. Its subcellular location is the chloroplast. Usually encoded in the trnK tRNA gene intron. Probably assists in splicing its own and other chloroplast group II introns. In Pseudoturritis turrita (Tower rock-cress), this protein is Maturase K.